The sequence spans 324 residues: Aldo-keto reductase family 1 member A1 (324 aa).

At Ser-3 the chain carries Phosphoserine. Residues Gly-10–Gly-19, Thr-20, and Trp-21 each bind NADP(+). A Phosphoserine modification is found at Ser-37. Asp-44 serves as a coordination point for NADP(+). Residue Tyr-49 is the Proton donor of the active site. The residue at position 126 (Lys-126) is an N6-acetyllysine; alternate. Position 126 is an N6-succinyllysine; alternate (Lys-126). N6-succinyllysine is present on Lys-144. The NADP(+) site is built by Ser-161, Asn-162, Ser-210, Leu-212, Ser-214, Ser-215, Lys-262, Ser-263, Ile-264, Thr-265, Arg-268, Gln-271, and Asn-272. Ser-210 is modified (phosphoserine).

It belongs to the aldo/keto reductase family.

The protein localises to the cytoplasm. The protein resides in the cytosol. Its subcellular location is the apical cell membrane. The catalysed reaction is a primary alcohol + NADP(+) = an aldehyde + NADPH + H(+). It carries out the reaction L-gulonate + NADP(+) = aldehydo-D-glucuronate + NADPH + H(+). It catalyses the reaction L-gulono-1,4-lactone + NADP(+) = D-glucurono-3,6-lactone + NADPH + H(+). The enzyme catalyses allyl alcohol + NADP(+) = acrolein + NADPH + H(+). The catalysed reaction is glycerol + NADP(+) = D-glyceraldehyde + NADPH + H(+). It carries out the reaction glycerol + NADP(+) = L-glyceraldehyde + NADPH + H(+). It catalyses the reaction hydroxyacetone + NADP(+) = methylglyoxal + NADPH + H(+). The enzyme catalyses 3-deoxyfructose + NADP(+) = 3-deoxyglucosone + NADPH + H(+). The catalysed reaction is (R)-mevalonate + NADP(+) = (R)-mevaldate + NADPH + H(+). It carries out the reaction S-nitroso-CoA + NADPH + H(+) = sulfinamide-CoA + NADP(+). It catalyses the reaction S-nitrosoglutathione + NADPH + H(+) = S-(hydroxysulfenamide)glutathione + NADP(+). Catalyzes the NADPH-dependent reduction of a wide variety of carbonyl-containing compounds to their corresponding alcohols. Displays enzymatic activity towards endogenous metabolites such as aromatic and aliphatic aldehydes, ketones, monosaccharides and bile acids, with a preference for negatively charged substrates, such as glucuronate and succinic semialdehyde. Plays an important role by catalyzing the reduction of D-glucuronic acid and D-glucurono-gamma-lactone. Functions as a detoxifiying enzyme by reducing a range of toxic aldehydes. Reduces methylglyoxal and 3-deoxyglucosone, which are present at elevated levels under hyperglycemic conditions and are cytotoxic. Involved also in the detoxification of lipid-derived aldehydes like acrolein. Plays a role in the activation of procarcinogens, such as polycyclic aromatic hydrocarbon trans-dihydrodiols, and in the metabolism of various xenobiotics and drugs. Also acts as an inhibitor of protein S-nitrosylation by mediating degradation of S-nitroso-coenzyme A (S-nitroso-CoA), a cofactor required to S-nitrosylate proteins. S-nitroso-CoA reductase activity is involved in reprogramming intermediary metabolism in renal proximal tubules, notably by inhibiting protein S-nitrosylation of isoform 2 of PKM (PKM2). Also acts as a S-nitroso-glutathione reductase by catalyzing the NADPH-dependent reduction of S-nitrosoglutathione. Displays no reductase activity towards retinoids. The protein is Aldo-keto reductase family 1 member A1 (AKR1A1) of Cricetulus griseus (Chinese hamster).